The following is a 252-amino-acid chain: 3-deoxy-manno-octulosonate cytidylyltransferase 2 (252 aa).

The protein belongs to the KdsB family.

The protein localises to the cytoplasm. It catalyses the reaction 3-deoxy-alpha-D-manno-oct-2-ulosonate + CTP = CMP-3-deoxy-beta-D-manno-octulosonate + diphosphate. It functions in the pathway nucleotide-sugar biosynthesis; CMP-3-deoxy-D-manno-octulosonate biosynthesis; CMP-3-deoxy-D-manno-octulosonate from 3-deoxy-D-manno-octulosonate and CTP: step 1/1. It participates in bacterial outer membrane biogenesis; lipopolysaccharide biosynthesis. Activates KDO (a required 8-carbon sugar) for incorporation into bacterial lipopolysaccharide in Gram-negative bacteria. The polypeptide is 3-deoxy-manno-octulosonate cytidylyltransferase 2 (Actinobacillus pleuropneumoniae serotype 5b (strain L20)).